We begin with the raw amino-acid sequence, 617 residues long: MSWGTELWDQFDNLEKHTQWGIDILEKYIKFVKERTEIELSYAKQLRNLSKKYQPKKNSKEEEEYKYTSCKAFISNLNEMNDYAGQHEVISENMASQIIVDLARYVQELKQERKSNFHDGRKAQQHIETCWKQLESSKRRFERDCKEADRAQQYFEKMDADINVTKADVEKARQQAQIRHQMAEDSKADYSSILQKFNHEQHEYYHTHIPNIFQKIQEMEERRIVRMGESMKTYAEVDRQVIPIIGKCLDGIVKAAESIDQKNDSQLVIEAYKSGFEPPGDIEFEDYTQPMKRTVSDNSLSNSRGEGKPDLKFGGKSKGKLWPFIKKNKLMSLLTSPHQPPPPPPASASPSAVPNGPQSPKQQKEPLSHRFNEFMTSKPKIHCFRSLKRGLSLKLGATPEDFSNLPPEQRRKKLQQKVDELNKEIQKEMDQRDAITKMKDVYLKNPQMGDPASLDHKLAEVSQNIEKLRVETQKFEAWLAEVEGRLPARSEQARRQSGLYDSQNPPTVNNCAQDRESPDGSYTEEQSQESEMKVLATDFDDEFDDEEPLPAIGTCKALYTFEGQNEGTISVVEGETLYVIEEDKGDGWTRIRRNEDEEGYVPTSYVEVCLDKNAKDS.

The required for self-association and induction of membrane tubulation stretch occupies residues 1 to 79; sequence MSWGTELWDQ…CKAFISNLNE (79 aa). One can recognise an F-BAR domain in the interval 1 to 264; that stretch reads MSWGTELWDQ…AAESIDQKND (264 aa). The segment at 1-335 is interaction with microtubules; that stretch reads MSWGTELWDQ…KKNKLMSLLT (335 aa). N6-acetyllysine occurs at positions 66 and 110. Residues 67 to 259 adopt a coiled-coil conformation; that stretch reads YTSCKAFISN…DGIVKAAESI (193 aa). Positions 251-617 are required for self-association and induction of membrane tubulation; sequence GIVKAAESID…VCLDKNAKDS (367 aa). Disordered stretches follow at residues 280 to 315 and 333 to 366; these read GDIE…KFGG and LLTS…QKEP. Residues Ser-296 and Ser-299 each carry the phosphoserine modification. Positions 338–347 are enriched in pro residues; it reads HQPPPPPPAS. 2 positions are modified to phosphoserine: Ser-349 and Ser-359. Positions 398-490 form a coiled coil; sequence TPEDFSNLPP…EVEGRLPARS (93 aa). Positions 400 to 552 are interaction with RND2; the sequence is EDFSNLPPEQ…FDDEEPLPAI (153 aa). The REM-1 domain occupies 404-481; the sequence is NLPPEQRRKK…TQKFEAWLAE (78 aa). Residues 486–531 form a disordered region; sequence LPARSEQARRQSGLYDSQNPPTVNNCAQDRESPDGSYTEEQSQESE. The interaction with PDE6G stretch occupies residues 495–617; sequence RQSGLYDSQN…VCLDKNAKDS (123 aa). Phosphoserine is present on Ser-497. The span at 499-512 shows a compositional bias: polar residues; sequence LYDSQNPPTVNNCA. At Tyr-500 the chain carries Phosphotyrosine. The interval 514 to 617 is required for interaction with TNKS; that stretch reads DRESPDGSYT…VCLDKNAKDS (104 aa). Position 521 is a phosphoserine (Ser-521). Positions 535 to 617 are interaction with DNM1 and DNM3; the sequence is LATDFDDEFD…VCLDKNAKDS (83 aa). Residues 550–611 form the SH3 domain; sequence PAIGTCKALY…PTSYVEVCLD (62 aa). An interaction with ARHGAP17, DAAM1, DIAPH1 and DIAPH2 region spans residues 550-617; the sequence is PAIGTCKALY…VCLDKNAKDS (68 aa). Positions 553 to 609 are interaction with DNM2 and WASL; that stretch reads GTCKALYTFEGQNEGTISVVEGETLYVIEEDKGDGWTRIRRNEDEEGYVPTSYVEVC. The interval 553–610 is interaction with FASLG; sequence GTCKALYTFEGQNEGTISVVEGETLYVIEEDKGDGWTRIRRNEDEEGYVPTSYVEVCL.

The protein belongs to the FNBP1 family. Interacts specifically with GTP-bound RND2 and CDC42. Interacts with PDE6G and microtubules. Homodimerizes, the dimers can polymerize end-to-end to form filamentous structures. Interacts with AKAP9, ARHGAP17, DAAM1, DIAPH1, DIAPH2, DNM1, DNM2, DNM3, FASLG/FASL, SNX2 and WASL/N-WASP. May interact with TNKS. Very highly expressed in the epithelial cells of the gastrointestinal tract, respiratory, reproductive and urinary systems. Also highly expressed in brown adipose tissue, cardiomyocytes, enteric ganglia and glucagon producing cells of the pancreas. Expressed in germ cells of the testis and all regions of the brain.

The protein resides in the cytoplasm. It is found in the cytoskeleton. Its subcellular location is the cell cortex. The protein localises to the lysosome. It localises to the cytoplasmic vesicle. The protein resides in the cell membrane. It is found in the membrane. Its subcellular location is the clathrin-coated pit. May act as a link between RND2 signaling and regulation of the actin cytoskeleton. Required to coordinate membrane tubulation with reorganization of the actin cytoskeleton during the late stage of clathrin-mediated endocytosis. Binds to lipids such as phosphatidylinositol 4,5-bisphosphate and phosphatidylserine and promotes membrane invagination and the formation of tubules. Also enhances actin polymerization via the recruitment of WASL/N-WASP, which in turn activates the Arp2/3 complex. Actin polymerization may promote the fission of membrane tubules to form endocytic vesicles. May be required for the lysosomal retention of FASLG/FASL. This is Formin-binding protein 1 (FNBP1) from Homo sapiens (Human).